Reading from the N-terminus, the 71-residue chain is Small ribosomal subunit protein bS21 (71 aa).

The span at 48-59 shows a compositional bias: basic residues; it reads EKASLAKRHAKR. A disordered region spans residues 48–71; that stretch reads EKASLAKRHAKRNARENARNTRLY. Residues 60 to 71 show a composition bias toward basic and acidic residues; that stretch reads NARENARNTRLY.

It belongs to the bacterial ribosomal protein bS21 family.

The chain is Small ribosomal subunit protein bS21 from Actinobacillus pleuropneumoniae serotype 5b (strain L20).